Reading from the N-terminus, the 955-residue chain is Beta-agarase B (955 aa).

Belongs to the glycosyl hydrolase 50 family.

The catalysed reaction is Hydrolysis of (1-&gt;4)-beta-D-galactosidic linkages in agarose, giving the tetramer as the predominant product.. Hydrolyzes agarose to yield predominantly neoagarotetraose and neoagarohexaose. The chain is Beta-agarase B (agaB) from Vibrio sp. (strain JT0107).